Consider the following 253-residue polypeptide: 3-dehydroquinate dehydratase (253 aa).

Residues 46–48 (EFR) and Arg-82 each bind 3-dehydroquinate. Residue His-143 is the Proton donor/acceptor of the active site. Residue Lys-170 is the Schiff-base intermediate with substrate of the active site. 3 residues coordinate 3-dehydroquinate: Arg-213, Ser-232, and Gln-236.

It belongs to the type-I 3-dehydroquinase family. In terms of assembly, homodimer.

The enzyme catalyses 3-dehydroquinate = 3-dehydroshikimate + H2O. It participates in metabolic intermediate biosynthesis; chorismate biosynthesis; chorismate from D-erythrose 4-phosphate and phosphoenolpyruvate: step 3/7. Functionally, involved in the third step of the chorismate pathway, which leads to the biosynthesis of aromatic amino acids. Catalyzes the cis-dehydration of 3-dehydroquinate (DHQ) and introduces the first double bond of the aromatic ring to yield 3-dehydroshikimate. This chain is 3-dehydroquinate dehydratase, found in Clostridium novyi (strain NT).